Reading from the N-terminus, the 158-residue chain is Arginine repressor (158 aa).

This sequence belongs to the ArgR family.

The protein resides in the cytoplasm. The protein operates within amino-acid biosynthesis; L-arginine biosynthesis [regulation]. Its function is as follows. Regulates arginine biosynthesis genes. This is Arginine repressor from Anaeromyxobacter sp. (strain Fw109-5).